The primary structure comprises 389 residues: Equilibrative nucleotide transporter 8 (389 aa).

10 consecutive transmembrane segments (helical) span residues 19-39, 57-77, 87-107, 119-139, 150-170, 187-207, 238-258, 266-286, 331-351, and 367-387; these read VAYVIHFLLGAGSLIPWNALI, TFTVAYMSCSVLVLVLMMTWN, NLGFSMFIIAMMISPLIDWVW, LMVGSVVLCGLADGVVGGSLI, MQAIFAGTASSGIIISLLRIA, HSYFIVSSTILLCCFISCNVL, WPASGMLIIYSVTLSIFPGFI, LLQSWYPILLITVYNISDFVG, VVVLTFMLGLTNGYLTSVLMI, and IFMVVFLGLGLVCGSVIGWLW.

It belongs to the SLC29A/ENT transporter (TC 2.A.57) family. Expressed in stems, flowers and siliques.

The protein resides in the cell membrane. May be involved in nucleoside transport. In Arabidopsis thaliana (Mouse-ear cress), this protein is Equilibrative nucleotide transporter 8 (ETN8).